The following is a 338-amino-acid chain: Sulfotransferase 2B1 (338 aa).

67-72 lines the 3'-phosphoadenylyl sulfate pocket; it reads KSGTNW. W95 and W100 together coordinate substrate. Catalysis depends on H122, which acts as the Proton acceptor. 3'-phosphoadenylyl sulfate contacts are provided by residues R144, S152, Y207, 241–246, and 271–273; these read SAFAAM and RKG. The segment at 301–338 is disordered; it reads VQRFPWDTSEEDSSPDGQPDPEPSPSPASDDPNPGSSQ. Positions 327-338 are enriched in low complexity; sequence PASDDPNPGSSQ.

This sequence belongs to the sulfotransferase 1 family. In terms of tissue distribution, expressed at high levels in epididymis, intestine and uterus, and low levels in brain and hypothalamus. Isoform 2 is most prominent in the brain and spinal cord, with modest expression in the lung, skin and spleen. Isoform 1 is most prominently expressed in skin and small intestine, with modest expression in muscle and prostate.

It localises to the cytoplasm. The protein resides in the cytosol. Its subcellular location is the microsome. It is found in the nucleus. It carries out the reaction an alcohol + 3'-phosphoadenylyl sulfate = an alkyl sulfate + adenosine 3',5'-bisphosphate + H(+). The catalysed reaction is pregnenolone + 3'-phosphoadenylyl sulfate = pregnenolone sulfate + adenosine 3',5'-bisphosphate + H(+). It catalyses the reaction 3beta-hydroxyandrost-5-en-17-one + 3'-phosphoadenylyl sulfate = dehydroepiandrosterone 3-sulfate + adenosine 3',5'-bisphosphate + H(+). The enzyme catalyses cholesterol + 3'-phosphoadenylyl sulfate = cholesterol sulfate + adenosine 3',5'-bisphosphate + H(+). Its function is as follows. Sulfotransferase that utilizes 3'-phospho-5'-adenylyl sulfate (PAPS) as sulfonate donor to catalyze the sulfate conjugation. Preferentially sulfonates cholesterol. Catalyzes sulfation of the 3beta-hydroxyl groups of steroids, such as, pregnenolone and dehydroepiandrosterone (DHEA). Cholesterol sulfation is approximately 10-fold higher than for pregnenolone and 20-fold higher than for DHEA. Plays a role in epidermal cholesterol metabolism and in the regulation of epidermal proliferation and differentiation. Strongly sulfonates pregnenolone, however is capable to sulfonate cholesterol with a high degree of efficiency. DHEA is a relatively poor substrate. In Mus musculus (Mouse), this protein is Sulfotransferase 2B1 (Sult2b1).